The chain runs to 881 residues: MDTAEIRSRFLNHFARRGHTVVPSASLVAQDPTLLLVNAGMVPFKPYFLGDLPAPWPRAASVQKCVRTVDIENVGHTARHASFFQMCGNFSFGDYFKAEAIPFAFELLTEGFGFKADDLWATVYLDDDEAEGIWRKLLPAERIQRRGKEDNFWSMGVPGPCGPCSEIYFDRGCAYGREGGPIADEERYLEVWNLVFMQYERGEGAGYDYPIERELPARNIDTGMGLERMATILQGVDNLYEIDISRPVLDAAGRLTGRRYGADPADDVRLRVIADHTRTAAMLISDGVVPSNEGRGYVLRRMLRRAIRNARLLGAHEPVMSELFAVVGSAMGTIYPELLDNAETITGVAVAEEQAFAETLRTGTTIFDTAARQARSLGSTTLGGEAAFKLHDTYGFPIDLTLEMAAEAGLSVDEAGFRRLMDRQRQAAKADRAARRIGNVDLSAFRPILARSGPTTFTGYEELSRTSGVVGLVGIADGAGLAAAGEDTEVGVVLDATPFYAESGGQEPDLGRLRFDGGEVEVLDVQRPVPDLVLHRVRVLGGELRLGVEVFAEVDADRRRAVSRSHTATHLVHTAFRRALGEGATQAGSLNSPGRLRFDFHALGAVPPSVLADVEDEINEVALRDLPVRAFVTTQEEARRLGAMALFGEKYGDAVRVVDVGDYARELCGGTHVASSAQLGAVKLLSEASISAGTRRVEGLVGLDAFRYLAREHLLVSQLSTALKARPDELVDRVTDIVGRLRDAERELERLRAAAVLAGAGALAEGAEEVAGVAVVTAEVPAGTAPDDVRLLALDVRGRLAGRPAVVAVAKADGSSIVVVTDDAARGRGLRAGDLVRQSWASLGGKGGGKPDVAQGGGGNPQLVPAVFARLRGLVAEHASR.

Zn(2+) contacts are provided by H566, H570, C668, and H672.

The protein belongs to the class-II aminoacyl-tRNA synthetase family. The cofactor is Zn(2+).

The protein resides in the cytoplasm. It carries out the reaction tRNA(Ala) + L-alanine + ATP = L-alanyl-tRNA(Ala) + AMP + diphosphate. Its function is as follows. Catalyzes the attachment of alanine to tRNA(Ala) in a two-step reaction: alanine is first activated by ATP to form Ala-AMP and then transferred to the acceptor end of tRNA(Ala). Also edits incorrectly charged Ser-tRNA(Ala) and Gly-tRNA(Ala) via its editing domain. The sequence is that of Alanine--tRNA ligase from Frankia casuarinae (strain DSM 45818 / CECT 9043 / HFP020203 / CcI3).